The sequence spans 545 residues: Esterase-5C (545 aa).

The first 19 residues, 1–19 (MLAARLIILLSFYWLSASA), serve as a signal peptide directing secretion. Cysteine 84 and cysteine 103 are joined by a disulfide. Asparagine 113 carries N-linked (GlcNAc...) asparagine glycosylation. The active-site Acyl-ester intermediate is the serine 207. An intrachain disulfide couples cysteine 259 to cysteine 271. Asparagine 421 carries N-linked (GlcNAc...) asparagine glycosylation. The Charge relay system role is filled by histidine 467. A glycan (N-linked (GlcNAc...) asparagine) is linked at asparagine 507. Cysteines 515 and 536 form a disulfide.

This sequence belongs to the type-B carboxylesterase/lipase family.

It localises to the secreted. It carries out the reaction a carboxylic ester + H2O = an alcohol + a carboxylate + H(+). The protein is Esterase-5C (Est-5C) of Drosophila persimilis (Fruit fly).